The sequence spans 411 residues: Eukaryotic initiation factor 4A-III (411 aa).

M1 carries the N-acetylmethionine modification. At A2 the chain carries N-acetylalanine; in Eukaryotic initiation factor 4A-III, N-terminally processed. S10 and S12 each carry phosphoserine. K19 participates in a covalent cross-link: Glycyl lysine isopeptide (Lys-Gly) (interchain with G-Cter in SUMO2). The Q motif motif lies at P38 to Q66. Residues K60, Q65, and G85–A90 contribute to the ATP site. One can recognise a Helicase ATP-binding domain in the interval I69–I239. K124 bears the N6-acetyllysine mark. K152 is covalently cross-linked (Glycyl lysine isopeptide (Lys-Gly) (interchain with G-Cter in SUMO2)). T163 carries the post-translational modification Phosphothreonine. The DEAD box signature appears at D187–D190. K198 and K296 each carry N6-acetyllysine. One can recognise a Helicase C-terminal domain in the interval G250–I411. A Glycyl lysine isopeptide (Lys-Gly) (interchain with G-Cter in SUMO2) cross-link involves residue K314. Residue K321 is modified to N6-acetyllysine. Residues D342 and R367 to Y371 each bind ATP. Residues K374 and K382 each participate in a glycyl lysine isopeptide (Lys-Gly) (interchain with G-Cter in SUMO2) cross-link.

The protein belongs to the DEAD box helicase family. eIF4A subfamily. In terms of assembly, identified in the spliceosome C complex. Core component of the mRNA splicing-dependent exon junction complex (EJC); the core complex contains CASC3, EIF4A3, MAGOH or MAGOHB, and RBM8A. Interacts with CASC3, MAGOH, NXF1, RBM8A and ALYREF/THOC4. Component of the ALYREF/THOC4-EJC-RNA complex; in the complex interacts with MAGOH, RBM8A and THOC4 (via the WXHD motif); these interactions are likely specific to RNA-bound EJC. May interact with NOM1. Interacts with POLDIP3. Interacts with CWC22 and PRPF19 in an RNA-independent manner. Direct interaction with CWC22 is mediated by the helicase C-terminal domain. Full interaction with CWC22 occurs only when EIF4A3 is not part of the EJC and prevents EIF4A3 binding to RNA. Identified in a complex composed of the EJC core, UPF3B and UPF2. The EJC core can also interact with UPF3A (in vitro). Interacts with NCBP3. Interacts with NRDE2. Interacts with DHX34; the interaction is RNA-independent.

The protein localises to the nucleus. It localises to the nucleus speckle. Its subcellular location is the cytoplasm. The catalysed reaction is ATP + H2O = ADP + phosphate + H(+). With respect to regulation, the ATPase activity is increased some 4-fold in the presence of RNA. In terms of biological role, ATP-dependent RNA helicase. Involved in pre-mRNA splicing as component of the spliceosome. Core component of the splicing-dependent multiprotein exon junction complex (EJC) deposited at splice junctions on mRNAs. The EJC is a dynamic structure consisting of core proteins and several peripheral nuclear and cytoplasmic associated factors that join the complex only transiently either during EJC assembly or during subsequent mRNA metabolism. The EJC marks the position of the exon-exon junction in the mature mRNA for the gene expression machinery and the core components remain bound to spliced mRNAs throughout all stages of mRNA metabolism thereby influencing downstream processes including nuclear mRNA export, subcellular mRNA localization, translation efficiency and nonsense-mediated mRNA decay (NMD). Its RNA-dependent ATPase and RNA-helicase activities are induced by CASC3, but abolished in presence of the MAGOH-RBM8A heterodimer, thereby trapping the ATP-bound EJC core onto spliced mRNA in a stable conformation. The inhibition of ATPase activity by the MAGOH-RBM8A heterodimer increases the RNA-binding affinity of the EJC. Involved in translational enhancement of spliced mRNAs after formation of the 80S ribosome complex. Binds spliced mRNA in sequence-independent manner, 20-24 nucleotides upstream of mRNA exon-exon junctions. Shows higher affinity for single-stranded RNA in an ATP-bound core EJC complex than after the ATP is hydrolyzed. Involved in the splicing modulation of BCL2L1/Bcl-X (and probably other apoptotic genes); specifically inhibits formation of proapoptotic isoforms; the function is different from the established EJC assembly. Involved in craniofacial development. This is Eukaryotic initiation factor 4A-III (Eif4a3) from Mus musculus (Mouse).